A 391-amino-acid chain; its full sequence is Formate-dependent phosphoribosylglycinamide formyltransferase (391 aa).

N(1)-(5-phospho-beta-D-ribosyl)glycinamide is bound by residues 20–21 (EL) and Glu-80. ATP is bound by residues Arg-112, Lys-153, 158–163 (SSGKGQ), 193–196 (EGFI), and Glu-201. An ATP-grasp domain is found at 117–306 (RLAAETLGLP…EFALHVRAIL (190 aa)). Mg(2+) contacts are provided by Glu-265 and Glu-277. N(1)-(5-phospho-beta-D-ribosyl)glycinamide-binding positions include Asp-284, Lys-354, and 361–362 (RR).

The protein belongs to the PurK/PurT family. Homodimer.

The catalysed reaction is N(1)-(5-phospho-beta-D-ribosyl)glycinamide + formate + ATP = N(2)-formyl-N(1)-(5-phospho-beta-D-ribosyl)glycinamide + ADP + phosphate + H(+). It functions in the pathway purine metabolism; IMP biosynthesis via de novo pathway; N(2)-formyl-N(1)-(5-phospho-D-ribosyl)glycinamide from N(1)-(5-phospho-D-ribosyl)glycinamide (formate route): step 1/1. Functionally, involved in the de novo purine biosynthesis. Catalyzes the transfer of formate to 5-phospho-ribosyl-glycinamide (GAR), producing 5-phospho-ribosyl-N-formylglycinamide (FGAR). Formate is provided by PurU via hydrolysis of 10-formyl-tetrahydrofolate. This is Formate-dependent phosphoribosylglycinamide formyltransferase from Shewanella sp. (strain ANA-3).